Reading from the N-terminus, the 801-residue chain is MKFNQFAHVKVPFEQKLAELNRIAFLHAGDEDLASNHIYRLFLERAFPNFKTEAAKNHALSNLAATENADILTYLNSSKINARVFYAVGLQLLGFEAELDFDLKDPFSAMDKLNLPYQKEIHHRDDVINAWYDLLCTSTKKGQNLLDILANRGYFTQFYQLNLTEPIFFNGKAQPVFDTNKLIHEVVYVESELDTDQDGKRDLLKVIITRPAMTDNGMKVPTIFTASPYYLGTNDASAEKMMHSVDLPITRKEVKPLSYQDIEYHKPETKLPKKRPVVISTKNAEESWEHLFTYTFNDYMLARGFAVVYSGGVGTLDSDGYRTCGDEAETLGAKDVVEWLNGKRTAFTTKEANKAIPAWWSNGKVAMTGKSYLGTLATAAATTGVAGLETIISEAAISSWYDYYREGGLVIAPGGFPGEDADILAEECFSRQKSAGDYNHSKDGFNKFLSTITKDQDRTTGNYNTFWDARNYLKDVGNIKCDIVMVHGLNDWNVKLKNVFNLYNKLGDVEVTKKLILHQGQHIYINNFQSLDFTDMMNLWLSHKLYGVENNAKELLPDILVQNNTKESTWETYSSWQSKNFTKLYLNSDSLSAQKKENQTLEFSDHLPETTFKHYQTDIANWKEEILASTSPKLETNRLILTSKPLKHETLLKGVAKIKLKIASQLDHGLVSVKLVDYGDAKRLGATPTILERRGLDLGYHWKEDNLVEFKLAKETPFKMITQAHLNLQNRHNDFSTDELEANKFYDVEITTQPMFYHLPKGHKLGLVIYATDMEMTLQGNEENSYRIDTTGSYCLLPIEE.

Active-site charge relay system residues include Ser371, Asp491, and His522.

The protein belongs to the peptidase S15 family. Homodimer.

The protein resides in the cytoplasm. The catalysed reaction is Hydrolyzes Xaa-Pro-|- bonds to release unblocked, N-terminal dipeptides from substrates including Ala-Pro-|-p-nitroanilide and (sequentially) Tyr-Pro-|-Phe-Pro-|-Gly-Pro-|-Ile.. Removes N-terminal dipeptides sequentially from polypeptides having unsubstituted N-termini provided that the penultimate residue is proline. The sequence is that of Xaa-Pro dipeptidyl-peptidase from Ligilactobacillus salivarius (strain UCC118) (Lactobacillus salivarius).